Reading from the N-terminus, the 301-residue chain is Transcriptional activator FeaR (301 aa).

The HTH araC/xylS-type domain occupies 199–299 (QKVVTLIDDN…GMTPGEYRRK (101 aa)). 2 consecutive DNA-binding regions (H-T-H motif) follow at residues 217-238 (EWIAGETGMSVRSLYRMFADKG) and 266-289 (LAGIGFHWGFSDQSHFSTVFKQRF).

Its function is as follows. Positive regulator of tynA/maoA and feaB/padA, the genes for 2-phenylethylamine catabolism. The protein is Transcriptional activator FeaR (feaR) of Escherichia coli (strain K12).